A 229-amino-acid chain; its full sequence is 2-C-methyl-D-erythritol 4-phosphate cytidylyltransferase (229 aa).

This sequence belongs to the IspD/TarI cytidylyltransferase family. IspD subfamily.

The enzyme catalyses 2-C-methyl-D-erythritol 4-phosphate + CTP + H(+) = 4-CDP-2-C-methyl-D-erythritol + diphosphate. It participates in isoprenoid biosynthesis; isopentenyl diphosphate biosynthesis via DXP pathway; isopentenyl diphosphate from 1-deoxy-D-xylulose 5-phosphate: step 2/6. In terms of biological role, catalyzes the formation of 4-diphosphocytidyl-2-C-methyl-D-erythritol from CTP and 2-C-methyl-D-erythritol 4-phosphate (MEP). This Neisseria gonorrhoeae (strain ATCC 700825 / FA 1090) protein is 2-C-methyl-D-erythritol 4-phosphate cytidylyltransferase.